Reading from the N-terminus, the 3432-residue chain is Genome polyprotein (3432 aa).

The interval 2–15 (TKKPGGPGKNRAIN) is interaction with host EXOC1. Topologically, residues 2-109 (TKKPGGPGKN…RKQNKRGGNE (108 aa)) are cytoplasmic. The segment at 37–72 (LLDGRGPVRFVLALITFFKFTALAPTKALLGRWKAV) is hydrophobic; homodimerization of capsid protein C. A propeptide spans 106 to 127 (GGNEGSIMWLASLAVVIAYAGA) (ER anchor for the capsid protein C, removed in mature form by serine protease NS3). A helical transmembrane segment spans residues 110–130 (GSIMWLASLAVVIAYAGAMKL). Residues 131 to 253 (SNFQGKLLMT…ATRYLMKTEN (123 aa)) are Extracellular-facing. Asn-142 is a glycosylation site (N-linked (GlcNAc...) asparagine; by host). A helical membrane pass occupies residues 254–274 (WIIRNPGYAFLAATLGWMLGS). Topologically, residues 275–279 (NNGQR) are cytoplasmic. Residues 280–294 (VVFTILLLLVAPAYS) form a helical membrane-spanning segment. The Extracellular segment spans residues 295–746 (FNCLGMGNRD…QVFGGAFRTL (452 aa)). Intrachain disulfides connect Cys-297–Cys-324, Cys-354–Cys-410, Cys-354–Cys-415, Cys-368–Cys-399, Cys-386–Cys-410, and Cys-386–Cys-415. Positions 392–405 (DRGWGNGCGLFGKG) are fusion peptide. Asn-448 carries N-linked (GlcNAc...) asparagine; by host glycosylation. Disulfide bonds link Cys-484-Cys-581 and Cys-598-Cys-629. A helical transmembrane segment spans residues 747 to 767 (FGGMSWITQGLMGALLLWMGV). At 768-773 (NARDRS) the chain is on the cytoplasmic side. Residues 774–794 (IALAFLATGGVLVFLATNVHA) traverse the membrane as a helical segment. At 795–1219 (DTGCAIDITR…AFAEANSGGD (425 aa)) the chain is on the extracellular side. 6 cysteine pairs are disulfide-bonded: Cys-798-Cys-809, Cys-849-Cys-937, Cys-973-Cys-1017, Cys-1074-Cys-1123, Cys-1085-Cys-1106, and Cys-1107-Cys-1110. N-linked (GlcNAc...) asparagine; by host glycans are attached at residues Asn-924 and Asn-1001. A helical membrane pass occupies residues 1220 to 1240 (VLHLALIAVFKIQPAFLVMNM). Topologically, residues 1241–1250 (LSTRWTNQEN) are cytoplasmic. A helical transmembrane segment spans residues 1251–1271 (VVLVLGAALFQLASVDLQIGV). A topological domain (lumenal) is located at residue His-1272. A helical membrane pass occupies residues 1273-1293 (GILNAAAIAWMIVRAITFPTT). At 1294–1309 (SSVTMPVLALLTPGMR) the chain is on the cytoplasmic side. A helical membrane pass occupies residues 1310-1330 (ALYLDTYRIILLVIGICSLLQ). The Lumenal segment spans residues 1331–1341 (ERKKTMAKKKG). The helical transmembrane segment at 1342–1362 (AVLLGLALTSTGWFSPTTIAA) threads the bilayer. Residues 1363–1374 (GLMVCNPNKKRG) lie on the Cytoplasmic side of the membrane. Residues 1375–1395 (WPATEFLSAVGLMFAIVGGLA) form a helical membrane-spanning segment. The Lumenal portion of the chain corresponds to 1396-1398 (ELD). Residues 1399 to 1419 (IESMSIPFMLAGLMAVSYVVS) traverse the membrane as a helical segment. The Cytoplasmic segment spans residues 1420–1476 (GKATDMWLERAADISWEMDAAITGSSRRLDVKLDDDGDFHLIDDPGVPWKVWVLRMS). Residues 1427 to 1466 (LERAADISWEMDAAITGSSRRLDVKLDDDGDFHLIDDPGV) form an interacts with and activates NS3 protease region. The helical intramembrane region spans 1477 to 1497 (CIGLAALTPWAIVPAAFGYWL). Topologically, residues 1498 to 2173 (TLKTTKRGGV…RMALEELPDA (676 aa)) are cytoplasmic. Residues 1505-1682 (GGVFWDTPSP…DRQEEPVPEA (178 aa)) enclose the Peptidase S7 domain. Catalysis depends on charge relay system; for serine protease NS3 activity residues His-1555, Asp-1579, and Ser-1639. A Helicase ATP-binding domain is found at 1685 to 1841 (PNMLRKRQMT…DSNAPIHDLQ (157 aa)). The interval 1689 to 1692 (RKRQ) is important for RNA-binding. Residue 1698 to 1705 (LHPGSGKT) coordinates ATP. The DEAH box motif lies at 1789-1792 (DEAH). In terms of domain architecture, Helicase C-terminal spans 1852–2017 (GYEWITEYAG…GLVAQLYGPE (166 aa)). Residue Lys-1893 is modified to N6-acetyllysine; by host. A disordered region spans residues 1950 to 1971 (NPSPITSASAAQRRGRVGRNPN). Residues 2168-2172 (EELPD) form a regulates the ATPase activity of NS3 helicase region. The chain crosses the membrane as a helical span at residues 2174–2194 (LETITLIVAITVMTGGFFLLM). The Lumenal portion of the chain corresponds to 2195-2199 (MQRKG). The helical intramembrane region spans 2200-2220 (IGKMGLGALVLTLATFFLWAA). Position 2221 (Glu-2221) is a topological domain, lumenal. A helical transmembrane segment spans residues 2222–2242 (VPGTKIAGTLLIALLLMVVLI). At 2243-2257 (PEPEKQRSQTDNQLA) the chain is on the cytoplasmic side. Residues 2258–2278 (VFLICVLTVVGVVAANEYGML) traverse the membrane as a helical segment. At 2279 to 2311 (EKTKADLKSMFVGKTQASGLTGLPSMALDLRPA) the chain is on the lumenal side. An intramembrane region (helical) is located at residues 2312–2332 (TAWALYGGSTVVLTPLLKHLI). Residues 2333–2368 (TSEYVTTSLASINSQAGSLFVLPRGVPFTDLDLTVG) are Lumenal-facing. Residues 2369 to 2389 (LVFLGCWGQITLTTFLTAMVL) traverse the membrane as a helical segment. At 2390–2444 (ATLHYGYMLPGWQAEALRAAQRRTAAGIMKNAVVDGMVATDVPELERTTPLMQKK) the chain is on the cytoplasmic side. The helical transmembrane segment at 2445 to 2465 (VGQVLLIGVSVAAFLVNPNVT) threads the bilayer. Residues 2466–2469 (TVRE) lie on the Lumenal side of the membrane. Residues 2470–2490 (AGVLVTAATLTLWDNGASAVW) form a helical membrane-spanning segment. Residues 2491-3432 (NSTTATGLCH…DVLIQEDRVI (942 aa)) lie on the Cytoplasmic side of the membrane. One can recognise an mRNA cap 0-1 NS5-type MT domain in the interval 2528–2793 (GRPGGRTLGE…DVNLGSGTRA (266 aa)). Ser-2583 contacts S-adenosyl-L-methionine. At Ser-2583 the chain carries Phosphoserine. Lys-2588 serves as the catalytic For 2'-O-MTase activity. The S-adenosyl-L-methionine site is built by Gly-2613, Trp-2614, Thr-2631, Lys-2632, Asp-2658, and Val-2659. Asp-2673 (for 2'-O-MTase activity) is an active-site residue. Position 2674 (Ile-2674) interacts with S-adenosyl-L-methionine. Residues Lys-2709 and Glu-2745 each act as for 2'-O-MTase activity in the active site. Tyr-2747 contributes to the S-adenosyl-L-methionine binding site. 4 residues coordinate Zn(2+): Glu-2967, His-2971, Cys-2976, and Cys-2979. Positions 3057–3209 (GKMYADDTAG…KPLDDRFATA (153 aa)) constitute a RdRp catalytic domain. Zn(2+) contacts are provided by His-3244, Cys-3260, and Cys-3379.

It in the N-terminal section; belongs to the class I-like SAM-binding methyltransferase superfamily. mRNA cap 0-1 NS5-type methyltransferase family. In terms of assembly, homodimer. Interacts (via N-terminus) with host EXOC1 (via C-terminus); this interaction results in EXOC1 degradation through the proteasome degradation pathway. As to quaternary structure, forms heterodimers with envelope protein E in the endoplasmic reticulum and Golgi. Homodimer; in the endoplasmic reticulum and Golgi. Interacts with protein prM. Interacts with non-structural protein 1. Interacts with host HSPA5. In terms of assembly, homodimer; Homohexamer when secreted. Interacts with envelope protein E. NS1 interacts with NS4B. Interacts with host complement protein CFH; this interaction leads to the degradation of C3. As to quaternary structure, interacts (via N-terminus) with serine protease NS3. Forms a heterodimer with serine protease NS3. May form homooligomers. In terms of assembly, forms a heterodimer with NS2B. Interacts with non-structural protein 2A (via N-terminus). Interacts with NS4B. Interacts with unphosphorylated RNA-directed RNA polymerase NS5; this interaction stimulates RNA-directed RNA polymerase NS5 guanylyltransferase activity. Interacts with host ILF2. As to quaternary structure, interacts with serine protease NS3. Homodimer. Interacts with host STAT2; this interaction inhibits the phosphorylation of the latter, and, when all viral proteins are present (polyprotein), targets STAT2 for degradation. Interacts with serine protease NS3. Mn(2+) is required as a cofactor. It depends on Mg(2+) as a cofactor. In terms of processing, specific enzymatic cleavages in vivo yield mature proteins. Cleavages in the lumen of endoplasmic reticulum are performed by host signal peptidase, whereas cleavages in the cytoplasmic side are performed by serine protease NS3. Signal cleavage at the 2K-4B site requires a prior NS3 protease-mediated cleavage at the 4A-2K site. Post-translationally, cleaved in post-Golgi vesicles by a host furin, releasing the mature small envelope protein M, and peptide pr. This cleavage is incomplete as up to 30% of viral particles still carry uncleaved prM. N-glycosylated. In terms of processing, N-glycosylated. The excreted form is glycosylated and this is required for efficient secretion of the protein from infected cells. Post-translationally, acetylated by host KAT5. Acetylation modulates NS3 RNA-binding and unwinding activities and plays an important positive role for viral replication. Phosphorylated on serines residues. This phosphorylation may trigger NS5 nuclear localization.

Its subcellular location is the virion. The protein localises to the host nucleus. It is found in the host cytoplasm. The protein resides in the host perinuclear region. It localises to the secreted. Its subcellular location is the virion membrane. The protein localises to the host endoplasmic reticulum membrane. It is found in the host cell surface. The catalysed reaction is Selective hydrolysis of -Xaa-Xaa-|-Yaa- bonds in which each of the Xaa can be either Arg or Lys and Yaa can be either Ser or Ala.. It catalyses the reaction RNA(n) + a ribonucleoside 5'-triphosphate = RNA(n+1) + diphosphate. It carries out the reaction a ribonucleoside 5'-triphosphate + H2O = a ribonucleoside 5'-diphosphate + phosphate + H(+). The enzyme catalyses ATP + H2O = ADP + phosphate + H(+). The catalysed reaction is a 5'-end (5'-triphosphoguanosine)-ribonucleoside in mRNA + S-adenosyl-L-methionine = a 5'-end (N(7)-methyl 5'-triphosphoguanosine)-ribonucleoside in mRNA + S-adenosyl-L-homocysteine. It catalyses the reaction a 5'-end (N(7)-methyl 5'-triphosphoguanosine)-ribonucleoside in mRNA + S-adenosyl-L-methionine = a 5'-end (N(7)-methyl 5'-triphosphoguanosine)-(2'-O-methyl-ribonucleoside) in mRNA + S-adenosyl-L-homocysteine + H(+). Functionally, plays a role in virus budding by binding to the cell membrane and gathering the viral RNA into a nucleocapsid that forms the core of a mature virus particle. During virus entry, may induce genome penetration into the host cytoplasm after hemifusion induced by the surface proteins. Can migrate to the cell nucleus where it modulates host functions. Overcomes the anti-viral effects of host EXOC1 by sequestering and degrading the latter through the proteasome degradation pathway. Its function is as follows. Inhibits RNA silencing by interfering with host Dicer. In terms of biological role, prevents premature fusion activity of envelope proteins in trans-Golgi by binding to envelope protein E at pH 6.0. After virion release in extracellular space, gets dissociated from E dimers. Acts as a chaperone for envelope protein E during intracellular virion assembly by masking and inactivating envelope protein E fusion peptide. prM is the only viral peptide matured by host furin in the trans-Golgi network probably to avoid catastrophic activation of the viral fusion activity in acidic Golgi compartment prior to virion release. prM-E cleavage is inefficient, and many virions are only partially matured. These uncleaved prM would play a role in immune evasion. Functionally, may play a role in virus budding. Exerts cytotoxic effects by activating a mitochondrial apoptotic pathway through M ectodomain. May display a viroporin activity. Its function is as follows. Binds to host cell surface receptor and mediates fusion between viral and cellular membranes. Efficient virus attachment to cell is, at least in part, mediated by host HSPA5. Envelope protein is synthesized in the endoplasmic reticulum in the form of heterodimer with protein prM. They play a role in virion budding in the ER, and the newly formed immature particle is covered with 60 spikes composed of heterodimer between precursor prM and envelope protein E. The virion is transported to the Golgi apparatus where the low pH causes dissociation of PrM-E heterodimers and formation of E homodimers. prM-E cleavage is inefficient, and many virions are only partially matured. These uncleaved prM would play a role in immune evasion. In terms of biological role, involved in immune evasion, pathogenesis and viral replication. Once cleaved off the polyprotein, is targeted to three destinations: the viral replication cycle, the plasma membrane and the extracellular compartment. Essential for viral replication. Required for formation of the replication complex and recruitment of other non-structural proteins to the ER-derived membrane structures. Excreted as a hexameric lipoparticle that plays a role against host immune response. Antagonizing the complement function. Binds to the host macrophages and dendritic cells. Inhibits signal transduction originating from Toll-like receptor 3 (TLR3). Component of the viral RNA replication complex that functions in virion assembly and antagonizes the host alpha/beta interferon antiviral response. Functionally, required cofactor for the serine protease function of NS3. May have membrane-destabilizing activity and form viroporins. Its function is as follows. Displays three enzymatic activities: serine protease, NTPase and RNA helicase. NS3 serine protease, in association with NS2B, performs its autocleavage and cleaves the polyprotein at dibasic sites in the cytoplasm: C-prM, NS2A-NS2B, NS2B-NS3, NS3-NS4A, NS4A-2K and NS4B-NS5. NS3 RNA helicase binds RNA and unwinds dsRNA in the 3' to 5' direction. In terms of biological role, regulates the ATPase activity of the NS3 helicase activity. NS4A allows NS3 helicase to conserve energy during unwinding. Functions as a signal peptide for NS4B and is required for the interferon antagonism activity of the latter. Functionally, induces the formation of ER-derived membrane vesicles where the viral replication takes place. Inhibits interferon (IFN)-induced host STAT1 phosphorylation and nuclear translocation, thereby preventing the establishment of cellular antiviral state by blocking the IFN-alpha/beta pathway. Inhibits STAT2 translocation in the nucleus after IFN-alpha treatment. Its function is as follows. Replicates the viral (+) and (-) RNA genome, and performs the capping of genomes in the cytoplasm. NS5 methylates viral RNA cap at guanine N-7 and ribose 2'-O positions. Besides its role in RNA genome replication, also prevents the establishment of cellular antiviral state by blocking the interferon-alpha/beta (IFN-alpha/beta) signaling pathway. Inhibits host TYK2 and STAT2 phosphorylation, thereby preventing activation of JAK-STAT signaling pathway. The protein is Genome polyprotein of Ardeidae (herons).